A 107-amino-acid chain; its full sequence is Integration host factor subunit alpha (107 aa).

It belongs to the bacterial histone-like protein family. As to quaternary structure, heterodimer of an alpha and a beta chain.

In terms of biological role, this protein is one of the two subunits of integration host factor, a specific DNA-binding protein that functions in genetic recombination as well as in transcriptional and translational control. This chain is Integration host factor subunit alpha, found in Brucella anthropi (strain ATCC 49188 / DSM 6882 / CCUG 24695 / JCM 21032 / LMG 3331 / NBRC 15819 / NCTC 12168 / Alc 37) (Ochrobactrum anthropi).